A 568-amino-acid chain; its full sequence is MGKIKKLPEHVIGKIAAGEVVAGPYSVVKELVENSLDAGATKIEIEIKSGGKSYIKVKDNGEGMGREDLLLSIYEHTTSKINDFDDIYNLSSFGFRGEALASIAKVSRIVITSNNGSESHRLEAIGGKIKSVNEYPLVEKGTIVEVYDLFFNVPARRKFLKSEATEKRYVVEYVEKFLLSNPDVEFIFRADNEIIYNARASNLEERFKLIFPEVKEYTLINGKYVEGIISSPNYHRKNRTGQIFFVQKRFVMDKMLYYIFENGYGEALVDHPYGVLFINVPSKLVDVNVHPQKLEVKFSNPNIIYSDITRTVREALKKFVSKQIFVKPINEKKTKSEVSSFETKNVNFSNDSFQDKFNSVFKESVNHVDYSKNMLFDISEKNLEVKNDVVILKKRYVLFEMEDGIYIMDFHAAHERVIYEQILEKLKVGIEKIDLIIPIEIKVGKSLKQIVIEKLDELKENGFEIKVENESVKILSIPSFIKPSDVDDIFKEIIDEYRIPSMGTKNMKHIIADKACKSAVRTGYDITEGEAKKLIEEVFKRNLTTCPHGRPLFLKITFNEIDKYFDRT.

Belongs to the DNA mismatch repair MutL/HexB family.

Its function is as follows. This protein is involved in the repair of mismatches in DNA. It is required for dam-dependent methyl-directed DNA mismatch repair. May act as a 'molecular matchmaker', a protein that promotes the formation of a stable complex between two or more DNA-binding proteins in an ATP-dependent manner without itself being part of a final effector complex. This Thermosipho africanus (strain TCF52B) protein is DNA mismatch repair protein MutL.